A 453-amino-acid chain; its full sequence is Homogentisate 1,2-dioxygenase (453 aa).

His-306 (proton acceptor) is an active-site residue. Residues His-349 and Glu-355 each coordinate Fe cation. Residues Tyr-364 and His-385 each coordinate homogentisate. A Fe cation-binding site is contributed by His-385.

The protein belongs to the homogentisate dioxygenase family. Hexamer; dimer of trimers. Fe cation serves as cofactor.

It catalyses the reaction homogentisate + O2 = 4-maleylacetoacetate + H(+). Its pathway is amino-acid degradation; L-phenylalanine degradation; acetoacetate and fumarate from L-phenylalanine: step 4/6. Its function is as follows. Involved in the catabolism of homogentisate (2,5-dihydroxyphenylacetate or 2,5-OH-PhAc), a central intermediate in the degradation of phenylalanine and tyrosine. Catalyzes the oxidative ring cleavage of the aromatic ring of homogentisate to yield maleylacetoacetate. The sequence is that of Homogentisate 1,2-dioxygenase from Rhizobium etli (strain CIAT 652).